The primary structure comprises 950 residues: Leucine--tRNA ligase (950 aa).

Positions 42 to 52 (PYLNGNLHAGH) match the 'HIGH' region motif. The short motif at 629–633 (KMSKS) is the 'KMSKS' region element. An ATP-binding site is contributed by Lys632. The disordered stretch occupies residues 928–950 (NPPYDPKGRAQNAEPGRPAIYIE).

It belongs to the class-I aminoacyl-tRNA synthetase family.

Its subcellular location is the cytoplasm. The catalysed reaction is tRNA(Leu) + L-leucine + ATP = L-leucyl-tRNA(Leu) + AMP + diphosphate. The sequence is that of Leucine--tRNA ligase from Methanothrix thermoacetophila (strain DSM 6194 / JCM 14653 / NBRC 101360 / PT) (Methanosaeta thermophila).